Reading from the N-terminus, the 102-residue chain is Cysteine-rich venom protein VAR9 (102 aa).

The N-terminal stretch at 1 to 19 (MILLKLYLTLAAILCQSRG) is a signal peptide. The region spanning 41-80 (NKHNDLRRTVDPPAKNMLKMSWDNIIAESAKRAALRCNYK) is the SCP domain.

The protein belongs to the CRISP family. In terms of processing, contains 8 disulfide bonds. In terms of tissue distribution, expressed by the venom gland.

It is found in the secreted. Its function is as follows. Blocks ryanodine receptors, and potassium channels. The protein is Cysteine-rich venom protein VAR9 of Varanus varius (Lace monitor lizard).